A 130-amino-acid polypeptide reads, in one-letter code: S-adenosylmethionine decarboxylase proenzyme (130 aa).

Serine 63 acts as the Schiff-base intermediate with substrate; via pyruvic acid in catalysis. Serine 63 is subject to Pyruvic acid (Ser); by autocatalysis. The active-site Proton acceptor; for processing activity is the histidine 68. Cysteine 83 (proton donor; for catalytic activity) is an active-site residue.

It belongs to the prokaryotic AdoMetDC family. Type 1 subfamily. As to quaternary structure, heterotetramer of two alpha and two beta chains arranged as a dimer of alpha/beta heterodimers. Pyruvate is required as a cofactor. Is synthesized initially as an inactive proenzyme. Formation of the active enzyme involves a self-maturation process in which the active site pyruvoyl group is generated from an internal serine residue via an autocatalytic post-translational modification. Two non-identical subunits are generated from the proenzyme in this reaction, and the pyruvate is formed at the N-terminus of the alpha chain, which is derived from the carboxyl end of the proenzyme. The post-translation cleavage follows an unusual pathway, termed non-hydrolytic serinolysis, in which the side chain hydroxyl group of the serine supplies its oxygen atom to form the C-terminus of the beta chain, while the remainder of the serine residue undergoes an oxidative deamination to produce ammonia and the pyruvoyl group blocking the N-terminus of the alpha chain.

The enzyme catalyses S-adenosyl-L-methionine + H(+) = S-adenosyl 3-(methylsulfanyl)propylamine + CO2. The protein operates within amine and polyamine biosynthesis; S-adenosylmethioninamine biosynthesis; S-adenosylmethioninamine from S-adenosyl-L-methionine: step 1/1. Catalyzes the decarboxylation of S-adenosylmethionine to S-adenosylmethioninamine (dcAdoMet), the propylamine donor required for the synthesis of the polyamines spermine and spermidine from the diamine putrescine. This is S-adenosylmethionine decarboxylase proenzyme from Thermotoga petrophila (strain ATCC BAA-488 / DSM 13995 / JCM 10881 / RKU-1).